The chain runs to 480 residues: Aspartyl/glutamyl-tRNA(Asn/Gln) amidotransferase subunit B (480 aa).

This sequence belongs to the GatB/GatE family. GatB subfamily. Heterotrimer of A, B and C subunits.

The catalysed reaction is L-glutamyl-tRNA(Gln) + L-glutamine + ATP + H2O = L-glutaminyl-tRNA(Gln) + L-glutamate + ADP + phosphate + H(+). It carries out the reaction L-aspartyl-tRNA(Asn) + L-glutamine + ATP + H2O = L-asparaginyl-tRNA(Asn) + L-glutamate + ADP + phosphate + 2 H(+). In terms of biological role, allows the formation of correctly charged Asn-tRNA(Asn) or Gln-tRNA(Gln) through the transamidation of misacylated Asp-tRNA(Asn) or Glu-tRNA(Gln) in organisms which lack either or both of asparaginyl-tRNA or glutaminyl-tRNA synthetases. The reaction takes place in the presence of glutamine and ATP through an activated phospho-Asp-tRNA(Asn) or phospho-Glu-tRNA(Gln). The sequence is that of Aspartyl/glutamyl-tRNA(Asn/Gln) amidotransferase subunit B from Caldicellulosiruptor saccharolyticus (strain ATCC 43494 / DSM 8903 / Tp8T 6331).